The chain runs to 746 residues: NAD(P)H-quinone oxidoreductase subunit 5, chloroplastic (746 aa).

A run of 16 helical transmembrane segments spans residues 9-29 (WIIPFLTLAVPILIGLGLLLV), 39-59 (IWAFPSVLLLSIVMVFSTNLS), 89-109 (IDSLTSIMSILIATVGMMVLI), 125-145 (FAYMSFFNTSMLGLVISPNLI), 147-167 (IYIFWELVGMCSYLSIGFWFT), 185-205 (GDFGLLLGILGLYWIAGSFEF), 222-242 (NVLNSSFAILCASLLFLGAVA), 261-281 (TPISALIHAATMVAAGIFLVA), 283-303 (LLPLLTVIPYIMNLISLIGVI), 330-350 (LGYIMLASGIGSYRAALFHSI), 357-377 (ALLFLGSGSIIHSMEPILGYS), 399-419 (ATFLLGTLSLCGIPPLACFWS), 428-448 (WLYSPIFAIIASSTTGLTAFY), 545-565 (TMLFPLLLLAILTLFVGSVGI), 608-628 (IYSVSIAFFGILIANLLYGSV), and 726-746 (LFFSLSSLSIALILVYFYLYF).

Belongs to the complex I subunit 5 family. In terms of assembly, NDH is composed of at least 16 different subunits, 5 of which are encoded in the nucleus.

The protein resides in the plastid. It is found in the chloroplast thylakoid membrane. It catalyses the reaction a plastoquinone + NADH + (n+1) H(+)(in) = a plastoquinol + NAD(+) + n H(+)(out). The enzyme catalyses a plastoquinone + NADPH + (n+1) H(+)(in) = a plastoquinol + NADP(+) + n H(+)(out). Its function is as follows. NDH shuttles electrons from NAD(P)H:plastoquinone, via FMN and iron-sulfur (Fe-S) centers, to quinones in the photosynthetic chain and possibly in a chloroplast respiratory chain. The immediate electron acceptor for the enzyme in this species is believed to be plastoquinone. Couples the redox reaction to proton translocation, and thus conserves the redox energy in a proton gradient. The polypeptide is NAD(P)H-quinone oxidoreductase subunit 5, chloroplastic (ndhF) (Amborella trichopoda).